Reading from the N-terminus, the 487-residue chain is Protein nucleotidyltransferase YdiU (487 aa).

ATP-binding residues include Gly92, Arg95, Lys106, Asp118, Gly119, Arg169, and Arg176. The active-site Proton acceptor is Asp253. Residues Asn254 and Asp263 each coordinate Mg(2+). Residue Asp263 participates in ATP binding.

It belongs to the SELO family. Requires Mg(2+) as cofactor. Mn(2+) serves as cofactor.

It carries out the reaction L-seryl-[protein] + ATP = 3-O-(5'-adenylyl)-L-seryl-[protein] + diphosphate. It catalyses the reaction L-threonyl-[protein] + ATP = 3-O-(5'-adenylyl)-L-threonyl-[protein] + diphosphate. The catalysed reaction is L-tyrosyl-[protein] + ATP = O-(5'-adenylyl)-L-tyrosyl-[protein] + diphosphate. The enzyme catalyses L-histidyl-[protein] + UTP = N(tele)-(5'-uridylyl)-L-histidyl-[protein] + diphosphate. It carries out the reaction L-seryl-[protein] + UTP = O-(5'-uridylyl)-L-seryl-[protein] + diphosphate. It catalyses the reaction L-tyrosyl-[protein] + UTP = O-(5'-uridylyl)-L-tyrosyl-[protein] + diphosphate. Functionally, nucleotidyltransferase involved in the post-translational modification of proteins. It can catalyze the addition of adenosine monophosphate (AMP) or uridine monophosphate (UMP) to a protein, resulting in modifications known as AMPylation and UMPylation. This chain is Protein nucleotidyltransferase YdiU, found in Bordetella pertussis (strain Tohama I / ATCC BAA-589 / NCTC 13251).